Consider the following 115-residue polypeptide: NADH-ubiquinone oxidoreductase chain 3 (115 aa).

The next 3 helical transmembrane spans lie at 3–23 (LMITLLTNFTLATLLVTIAFW), 55–75 (FFLVAITFLLFDLEIALLLPL), and 84–104 (LNTMLTMALLLIFLLAVSLAY).

Belongs to the complex I subunit 3 family. Core subunit of respiratory chain NADH dehydrogenase (Complex I) which is composed of 45 different subunits. Interacts with TMEM186. Interacts with TMEM242.

The protein resides in the mitochondrion inner membrane. It carries out the reaction a ubiquinone + NADH + 5 H(+)(in) = a ubiquinol + NAD(+) + 4 H(+)(out). Core subunit of the mitochondrial membrane respiratory chain NADH dehydrogenase (Complex I) which catalyzes electron transfer from NADH through the respiratory chain, using ubiquinone as an electron acceptor. Essential for the catalytic activity of complex I. The polypeptide is NADH-ubiquinone oxidoreductase chain 3 (Ovis aries (Sheep)).